The chain runs to 119 residues: NADH-quinone oxidoreductase subunit A (119 aa).

3 consecutive transmembrane segments (helical) span residues 9 to 29, 63 to 83, and 88 to 108; these read VLLF…LGYV, LVAI…PWAV, and VGGA…VGFV.

The protein belongs to the complex I subunit 3 family. As to quaternary structure, NDH-1 is composed of 14 different subunits. Subunits NuoA, H, J, K, L, M, N constitute the membrane sector of the complex.

It is found in the cell inner membrane. The enzyme catalyses a quinone + NADH + 5 H(+)(in) = a quinol + NAD(+) + 4 H(+)(out). In terms of biological role, NDH-1 shuttles electrons from NADH, via FMN and iron-sulfur (Fe-S) centers, to quinones in the respiratory chain. The immediate electron acceptor for the enzyme in this species is believed to be ubiquinone. Couples the redox reaction to proton translocation (for every two electrons transferred, four hydrogen ions are translocated across the cytoplasmic membrane), and thus conserves the redox energy in a proton gradient. The chain is NADH-quinone oxidoreductase subunit A from Delftia acidovorans (strain DSM 14801 / SPH-1).